A 314-amino-acid polypeptide reads, in one-letter code: MIEIEKPRIETIEVSEDAKFGKFVVEPLERGYGTTLGNSLRRILLSSLPGAAVKYIEIEGVLHEFSAVDNVVEDVSTIIMNIKKLALKIYSEEDKTLEIDVKDEGEVTASDITHDSDVEILNPELKIATVSKGGHLKVRLVANKGRGYALAEQNNTSDLPIGVIPVDSLYSPVERVNYTVENTRVGQSSDFDKLTLDVWTNGSITPQESVSLAAKIMTEHLNIFVSLTDEAQNAEIMIEKEEDQKEKVLEMSIEELDLSVRSYNCLKRAGINSVQELADKSEADMMKVRNLGRKSLEEVKYKLEDLGLGLRKED.

The interval 1 to 228 (MIEIEKPRIE…EHLNIFVSLT (228 aa)) is alpha N-terminal domain (alpha-NTD). The interval 245–314 (KEKVLEMSIE…DLGLGLRKED (70 aa)) is alpha C-terminal domain (alpha-CTD).

Belongs to the RNA polymerase alpha chain family. In terms of assembly, homodimer. The RNAP catalytic core consists of 2 alpha, 1 beta, 1 beta' and 1 omega subunit. When a sigma factor is associated with the core the holoenzyme is formed, which can initiate transcription.

The enzyme catalyses RNA(n) + a ribonucleoside 5'-triphosphate = RNA(n+1) + diphosphate. DNA-dependent RNA polymerase catalyzes the transcription of DNA into RNA using the four ribonucleoside triphosphates as substrates. This chain is DNA-directed RNA polymerase subunit alpha, found in Staphylococcus epidermidis (strain ATCC 35984 / DSM 28319 / BCRC 17069 / CCUG 31568 / BM 3577 / RP62A).